The chain runs to 227 residues: Probable septum site-determining protein MinC (227 aa).

The protein belongs to the MinC family. As to quaternary structure, interacts with MinD and FtsZ.

Functionally, cell division inhibitor that blocks the formation of polar Z ring septums. Rapidly oscillates between the poles of the cell to destabilize FtsZ filaments that have formed before they mature into polar Z rings. Prevents FtsZ polymerization. The protein is Probable septum site-determining protein MinC of Laribacter hongkongensis (strain HLHK9).